The chain runs to 215 residues: Cytochrome b6 (215 aa).

Residues 32-52 (IFYCLGGITLTCFLVQVATGF) traverse the membrane as a helical segment. Cysteine 35 contributes to the heme c binding site. The heme b site is built by histidine 86 and histidine 100. 3 consecutive transmembrane segments (helical) span residues 90–110 (ASMM…TGGF), 116–136 (LTWV…VTGY), and 186–206 (LHTF…FPMI). Histidine 187 and histidine 202 together coordinate heme b.

Belongs to the cytochrome b family. PetB subfamily. As to quaternary structure, the 4 large subunits of the cytochrome b6-f complex are cytochrome b6, subunit IV (17 kDa polypeptide, PetD), cytochrome f and the Rieske protein, while the 4 small subunits are PetG, PetL, PetM and PetN. The complex functions as a dimer. The cofactor is heme b. It depends on heme c as a cofactor.

It localises to the plastid. The protein localises to the chloroplast thylakoid membrane. Component of the cytochrome b6-f complex, which mediates electron transfer between photosystem II (PSII) and photosystem I (PSI), cyclic electron flow around PSI, and state transitions. This chain is Cytochrome b6, found in Jasminum nudiflorum (Winter jasmine).